Consider the following 221-residue polypeptide: Cytidylate kinase (221 aa).

An ATP-binding site is contributed by 11–19 (GPSGVGKST).

Belongs to the cytidylate kinase family. Type 1 subfamily.

The protein resides in the cytoplasm. The enzyme catalyses CMP + ATP = CDP + ADP. It catalyses the reaction dCMP + ATP = dCDP + ADP. The protein is Cytidylate kinase of Mycoplasmopsis pulmonis (strain UAB CTIP) (Mycoplasma pulmonis).